Reading from the N-terminus, the 586-residue chain is MLSENTTILMANGEIKDIANVTANSYVMCADGSAARVINVTQGYQKIYNIQQKTKHRAFEGEPGRLDPRRRTVYQRLALQCTAGHKLSVRVPTKPLLEKSGRNATKYKVRWRNLQQCQTLDGRIIIIPKNHHKTFPMTVEGEFAAKRFIEEMERSKGEYFNFDIEVRDLDYLDAQLRISSCIRFGPVLAGNGVLSKFLTGRSDLVTPAVKSMAWMLGLWLGDSTTKEPEISVDSLDPKLMESLRENAKIWGLYLTVCDDHVPLRAKHVRLHYGDGPDENRKTRNLRKNNPFWKAVTILKFKRDLDGEKQIPEFMYGEHIEVREAFLAGLIDSDGYVVKKGEGPESYKIAIQTVYSSIMDGIVHISRSLGMSATVTTRSAREEIIEGRKVQCQFTYDCNVAGGTTSQNVLSYCRSGHKTREVPPIIKREPVYFSFTDDFQGESTVYGLTIEGHKNFLLGNKIEVKSCRGCCVGEQLKISQKKNLKHCVACPRKGIKYFYKDWSGKNRVCARCYGRYKFSGHHCINCKYVPEAREVKKAKDKGEKLGITPEGLPVKGPECIKCGGILQFDAVRGPHKSCGNNAGARIC.

One can recognise a DOD-type homing endonuclease domain in the interval methionine 215 to methionine 370.

In terms of processing, rapidly degraded via the ubiquitin-26S proteasome system through two ubiquitin-conjugating enzymes UBC2/RAD6 and UBC3/CDC34.

The protein resides in the nucleus. Its function is as follows. Initiation of mating type interconversion. This protein is a site-specific endonuclease that cleaves a site in the mat locus on chromosome III. The double-strand break is followed by a unidirectional gene conversion event that replaces the information at the mat locus by information copied from either of the two homologous loci (HMR and HML) that reside at the extremity of the chromosome III. Endonuclease expression takes place in late G1 just before cells enter S phase. The polypeptide is Homothallic switching endonuclease (HO) (Saccharomyces cerevisiae (strain ATCC 204508 / S288c) (Baker's yeast)).